We begin with the raw amino-acid sequence, 213 residues long: Bcl-2-related ovarian killer protein (213 aa).

The BH4 motif lies at 32 to 44 (KALCRDYINSRLI). Positions 67 to 83 (VSAILLRLGDELEYIRP) match the BH3 motif. The BH1 motif lies at 113 to 132 (QIFTAGITWGKVVSLYAVAA). The BH2 motif lies at 165 to 179 (WLKRRGGWADITKCV). The helical transmembrane segment at 190 to 210 (WLVAAVCSFGHFLKAIFFVLL) threads the bilayer.

The protein belongs to the Bcl-2 family.

The protein resides in the membrane. In terms of biological role, may play a role in apoptosis. The protein is Bcl-2-related ovarian killer protein of Gallus gallus (Chicken).